The chain runs to 219 residues: Elongation factor Ts (219 aa).

The interval 82–85 (TDFV) is involved in Mg(2+) ion dislocation from EF-Tu.

Belongs to the EF-Ts family.

It is found in the cytoplasm. Its function is as follows. Associates with the EF-Tu.GDP complex and induces the exchange of GDP to GTP. It remains bound to the aminoacyl-tRNA.EF-Tu.GTP complex up to the GTP hydrolysis stage on the ribosome. The sequence is that of Elongation factor Ts from Gloeobacter violaceus (strain ATCC 29082 / PCC 7421).